Here is a 198-residue protein sequence, read N- to C-terminus: Na(+)-translocating NADH-quinone reductase subunit E (198 aa).

6 helical membrane-spanning segments follow: residues 11-31 (SVFI…FLAV), 35-55 (VSTA…SVPV), 77-97 (FLNF…LEMI), 110-130 (GIFL…SFMV), 140-160 (IVYG…LAGI), and 176-196 (LGIT…FSGV).

This sequence belongs to the NqrDE/RnfAE family. In terms of assembly, composed of six subunits; NqrA, NqrB, NqrC, NqrD, NqrE and NqrF.

The protein resides in the cell inner membrane. It catalyses the reaction a ubiquinone + n Na(+)(in) + NADH + H(+) = a ubiquinol + n Na(+)(out) + NAD(+). In terms of biological role, NQR complex catalyzes the reduction of ubiquinone-1 to ubiquinol by two successive reactions, coupled with the transport of Na(+) ions from the cytoplasm to the periplasm. NqrA to NqrE are probably involved in the second step, the conversion of ubisemiquinone to ubiquinol. The sequence is that of Na(+)-translocating NADH-quinone reductase subunit E from Histophilus somni (strain 2336) (Haemophilus somnus).